The primary structure comprises 156 residues: MAKKGSGYGPRGGDFRYNDEAVARLINAIMLDGKKVVATKIVYDAFDIIANKVEGGDALEVFRKAMGNVAPLVEVRSKRVGGATYQIPMEVPASRRTALAFRWIKQFAARRGGRSMAEKLAAELLDASNEQGASVKKRDEVHRMAEANKAFAHFRF.

This sequence belongs to the universal ribosomal protein uS7 family. In terms of assembly, part of the 30S ribosomal subunit. Contacts proteins S9 and S11.

In terms of biological role, one of the primary rRNA binding proteins, it binds directly to 16S rRNA where it nucleates assembly of the head domain of the 30S subunit. Is located at the subunit interface close to the decoding center, probably blocks exit of the E-site tRNA. The sequence is that of Small ribosomal subunit protein uS7 from Chlorobaculum tepidum (strain ATCC 49652 / DSM 12025 / NBRC 103806 / TLS) (Chlorobium tepidum).